The chain runs to 591 residues: NADH-quinone oxidoreductase subunit C/D (591 aa).

The segment at 1–182 is NADH dehydrogenase I subunit C; it reads MVTVVENIDP…TPYFLNTAKQ (182 aa). Positions 206 to 591 are NADH dehydrogenase I subunit D; the sequence is DFMFLNIGPN…IDVVMADCDR (386 aa).

In the N-terminal section; belongs to the complex I 30 kDa subunit family. This sequence in the C-terminal section; belongs to the complex I 49 kDa subunit family. NDH-1 is composed of 13 different subunits. Subunits NuoB, CD, E, F, and G constitute the peripheral sector of the complex.

Its subcellular location is the cell inner membrane. It catalyses the reaction a quinone + NADH + 5 H(+)(in) = a quinol + NAD(+) + 4 H(+)(out). Functionally, NDH-1 shuttles electrons from NADH, via FMN and iron-sulfur (Fe-S) centers, to quinones in the respiratory chain. The immediate electron acceptor for the enzyme in this species is believed to be ubiquinone. Couples the redox reaction to proton translocation (for every two electrons transferred, four hydrogen ions are translocated across the cytoplasmic membrane), and thus conserves the redox energy in a proton gradient. The chain is NADH-quinone oxidoreductase subunit C/D from Psychrobacter arcticus (strain DSM 17307 / VKM B-2377 / 273-4).